The primary structure comprises 261 residues: Enolase-phosphatase E1 (261 aa).

Mg(2+) contacts are provided by Asp16 and Glu18. Substrate is bound by residues Ser153–Ser154 and Lys187. Asp212 serves as a coordination point for Mg(2+).

It belongs to the HAD-like hydrolase superfamily. MasA/MtnC family. In terms of assembly, monomer. Mg(2+) serves as cofactor.

It localises to the cytoplasm. Its subcellular location is the nucleus. It carries out the reaction 5-methylsulfanyl-2,3-dioxopentyl phosphate + H2O = 1,2-dihydroxy-5-(methylsulfanyl)pent-1-en-3-one + phosphate. It functions in the pathway amino-acid biosynthesis; L-methionine biosynthesis via salvage pathway; L-methionine from S-methyl-5-thio-alpha-D-ribose 1-phosphate: step 3/6. The protein operates within amino-acid biosynthesis; L-methionine biosynthesis via salvage pathway; L-methionine from S-methyl-5-thio-alpha-D-ribose 1-phosphate: step 4/6. Its function is as follows. Bifunctional enzyme that catalyzes the enolization of 2,3-diketo-5-methylthiopentyl-1-phosphate (DK-MTP-1-P) into the intermediate 2-hydroxy-3-keto-5-methylthiopentenyl-1-phosphate (HK-MTPenyl-1-P), which is then dephosphorylated to form the acireductone 1,2-dihydroxy-3-keto-5-methylthiopentene (DHK-MTPene). The sequence is that of Enolase-phosphatase E1 from Homo sapiens (Human).